A 103-amino-acid polypeptide reads, in one-letter code: Large ribosomal subunit protein bL21 (103 aa).

This sequence belongs to the bacterial ribosomal protein bL21 family. Part of the 50S ribosomal subunit. Contacts protein L20.

Its function is as follows. This protein binds to 23S rRNA in the presence of protein L20. In Mycobacterium leprae (strain Br4923), this protein is Large ribosomal subunit protein bL21.